We begin with the raw amino-acid sequence, 335 residues long: Holliday junction branch migration complex subunit RuvB (335 aa).

Residues 1–183 (MDERIISSET…FGVIDHLEFY (183 aa)) are large ATPase domain (RuvB-L). Residues leucine 22, arginine 23, glycine 64, lysine 67, threonine 68, threonine 69, 130–132 (EDY), arginine 173, tyrosine 183, and arginine 220 contribute to the ATP site. Residue threonine 68 coordinates Mg(2+). Residues 184 to 254 (TEEQLTEIVL…LAKEALTLLQ (71 aa)) form a small ATPAse domain (RuvB-S) region. Residues 257-335 (PRGLDTIDQK…HLGISYEKEV (79 aa)) are head domain (RuvB-H). Residues arginine 293, arginine 312, and arginine 317 each coordinate DNA.

Belongs to the RuvB family. In terms of assembly, homohexamer. Forms an RuvA(8)-RuvB(12)-Holliday junction (HJ) complex. HJ DNA is sandwiched between 2 RuvA tetramers; dsDNA enters through RuvA and exits via RuvB. An RuvB hexamer assembles on each DNA strand where it exits the tetramer. Each RuvB hexamer is contacted by two RuvA subunits (via domain III) on 2 adjacent RuvB subunits; this complex drives branch migration. In the full resolvosome a probable DNA-RuvA(4)-RuvB(12)-RuvC(2) complex forms which resolves the HJ.

Its subcellular location is the cytoplasm. The enzyme catalyses ATP + H2O = ADP + phosphate + H(+). In terms of biological role, the RuvA-RuvB-RuvC complex processes Holliday junction (HJ) DNA during genetic recombination and DNA repair, while the RuvA-RuvB complex plays an important role in the rescue of blocked DNA replication forks via replication fork reversal (RFR). RuvA specifically binds to HJ cruciform DNA, conferring on it an open structure. The RuvB hexamer acts as an ATP-dependent pump, pulling dsDNA into and through the RuvAB complex. RuvB forms 2 homohexamers on either side of HJ DNA bound by 1 or 2 RuvA tetramers; 4 subunits per hexamer contact DNA at a time. Coordinated motions by a converter formed by DNA-disengaged RuvB subunits stimulates ATP hydrolysis and nucleotide exchange. Immobilization of the converter enables RuvB to convert the ATP-contained energy into a lever motion, pulling 2 nucleotides of DNA out of the RuvA tetramer per ATP hydrolyzed, thus driving DNA branch migration. The RuvB motors rotate together with the DNA substrate, which together with the progressing nucleotide cycle form the mechanistic basis for DNA recombination by continuous HJ branch migration. Branch migration allows RuvC to scan DNA until it finds its consensus sequence, where it cleaves and resolves cruciform DNA. The polypeptide is Holliday junction branch migration complex subunit RuvB (Listeria monocytogenes serotype 4b (strain CLIP80459)).